Here is a 269-residue protein sequence, read N- to C-terminus: Malonyl-[acyl-carrier protein] O-methyltransferase (269 aa).

The protein belongs to the methyltransferase superfamily.

The enzyme catalyses malonyl-[ACP] + S-adenosyl-L-methionine = malonyl-[ACP] methyl ester + S-adenosyl-L-homocysteine. It participates in cofactor biosynthesis; biotin biosynthesis. Functionally, converts the free carboxyl group of a malonyl-thioester to its methyl ester by transfer of a methyl group from S-adenosyl-L-methionine (SAM). It allows to synthesize pimeloyl-ACP via the fatty acid synthetic pathway. The chain is Malonyl-[acyl-carrier protein] O-methyltransferase from Bacillus cereus (strain ATCC 14579 / DSM 31 / CCUG 7414 / JCM 2152 / NBRC 15305 / NCIMB 9373 / NCTC 2599 / NRRL B-3711).